The primary structure comprises 164 residues: Large ribosomal subunit protein uL10 (164 aa).

This sequence belongs to the universal ribosomal protein uL10 family. Part of the ribosomal stalk of the 50S ribosomal subunit. The N-terminus interacts with L11 and the large rRNA to form the base of the stalk. The C-terminus forms an elongated spine to which L12 dimers bind in a sequential fashion forming a multimeric L10(L12)X complex.

In terms of biological role, forms part of the ribosomal stalk, playing a central role in the interaction of the ribosome with GTP-bound translation factors. The protein is Large ribosomal subunit protein uL10 of Aliivibrio fischeri (strain MJ11) (Vibrio fischeri).